A 288-amino-acid polypeptide reads, in one-letter code: ATP synthase gamma chain (288 aa).

The protein belongs to the ATPase gamma chain family. As to quaternary structure, F-type ATPases have 2 components, CF(1) - the catalytic core - and CF(0) - the membrane proton channel. CF(1) has five subunits: alpha(3), beta(3), gamma(1), delta(1), epsilon(1). CF(0) has three main subunits: a, b and c.

It is found in the cell membrane. Its function is as follows. Produces ATP from ADP in the presence of a proton gradient across the membrane. The gamma chain is believed to be important in regulating ATPase activity and the flow of protons through the CF(0) complex. In Staphylococcus aureus (strain Mu3 / ATCC 700698), this protein is ATP synthase gamma chain.